Here is a 513-residue protein sequence, read N- to C-terminus: Serine/threonine-protein phosphatase T (513 aa).

TPR repeat units lie at residues 12–45, 46–79, and 80–113; these read ALER…DSTQ, SIYF…DPKN, and IKAY…KPND. The interval 188–513 is catalytic; the sequence is KNMSQEFISK…MAYSNGGFGL (326 aa). Mn(2+) contacts are provided by Asp249, His251, Asp278, and Asn310. His311 acts as the Proton donor/acceptor in catalysis. His359 and His434 together coordinate Mn(2+).

This sequence belongs to the PPP phosphatase family. PP-5 (PP-T) subfamily. Interacts (via TPR repeats) with HSP82 (via C-terminal MEEVD pentapeptide). Mg(2+) serves as cofactor. Mn(2+) is required as a cofactor.

It localises to the nucleus. The enzyme catalyses O-phospho-L-seryl-[protein] + H2O = L-seryl-[protein] + phosphate. It carries out the reaction O-phospho-L-threonyl-[protein] + H2O = L-threonyl-[protein] + phosphate. With respect to regulation, stimulated by arachidonic acid and other unsaturated fatty acids, and by arachidoyl coenzyme A. In terms of biological role, protein phosphatase that specifically binds to and dephosphorylates the molecular chaperone Hsp90 (HSC82 and HSP82). Dephosphorylation positively regulates the Hsp90 chaperone machinery. The polypeptide is Serine/threonine-protein phosphatase T (PPT1) (Saccharomyces cerevisiae (strain ATCC 204508 / S288c) (Baker's yeast)).